A 199-amino-acid chain; its full sequence is Transmembrane protein 9B (199 aa).

The first 34 residues, 1-34, serve as a signal peptide directing secretion; the sequence is MASLWCGNLLRLGSGLSMSCLALSVLLLAQLTGA. Residue Asn-61 is glycosylated (N-linked (GlcNAc...) asparagine). Residues 106 to 126 traverse the membrane as a helical segment; that stretch reads IIIYLSILGLLLLYMVYLTLV. Phosphoserine is present on residues Ser-143 and Ser-190.

Belongs to the TMEM9 family. In terms of processing, N-glycosylated.

It is found in the lysosome membrane. The protein localises to the early endosome membrane. Functionally, enhances production of pro-inflammatory cytokines induced by TNF, IL1B, and TLR ligands. Has a role in TNF activation of both the NF-kappaB and MAPK pathways. The sequence is that of Transmembrane protein 9B (Tmem9b) from Mus musculus (Mouse).